Here is a 199-residue protein sequence, read N- to C-terminus: Superoxide dismutase [Fe] (199 aa).

Positions 27, 74, 158, and 162 each coordinate Fe cation.

This sequence belongs to the iron/manganese superoxide dismutase family. In terms of assembly, homodimer. Fe cation serves as cofactor.

The enzyme catalyses 2 superoxide + 2 H(+) = H2O2 + O2. In terms of biological role, destroys superoxide anion radicals which are normally produced within the cells and which are toxic to biological systems. The protein is Superoxide dismutase [Fe] (SODB) of Babesia bovis.